Here is a 396-residue protein sequence, read N- to C-terminus: Putative arsenical pump-driving ATPase 1 (396 aa).

8–15 is an ATP binding site; the sequence is GKGGVGKT.

This sequence belongs to the arsA ATPase family.

It carries out the reaction arsenite(in) + ATP + H2O = arsenite(out) + ADP + phosphate + H(+). Its function is as follows. Anion-transporting ATPase. Catalyzes the extrusion of arsenite. This is Putative arsenical pump-driving ATPase 1 (arsA1) from Aquifex aeolicus (strain VF5).